The primary structure comprises 231 residues: NADH-ubiquinone oxidoreductase chain 4 (231 aa).

7 consecutive transmembrane segments (helical) span residues 1–21 (PIAG…YGMI), 34–54 (MFIP…LTCL), 62–82 (LIAY…SIQT), 86–106 (LSGA…LFCL), 118–138 (ILIL…WWLL), 169–189 (TIIL…HIFL), and 211–231 (LLMT…ELVM).

It belongs to the complex I subunit 4 family.

It localises to the mitochondrion membrane. The enzyme catalyses a ubiquinone + NADH + 5 H(+)(in) = a ubiquinol + NAD(+) + 4 H(+)(out). In terms of biological role, core subunit of the mitochondrial membrane respiratory chain NADH dehydrogenase (Complex I) that is believed to belong to the minimal assembly required for catalysis. Complex I functions in the transfer of electrons from NADH to the respiratory chain. The immediate electron acceptor for the enzyme is believed to be ubiquinone. This Causus rhombeatus (Rhombic night adder) protein is NADH-ubiquinone oxidoreductase chain 4 (MT-ND4).